Consider the following 196-residue polypeptide: Peptide methionine sulfoxide reductase MsrA 2 (196 aa).

Cys36 is a catalytic residue.

This sequence belongs to the MsrA Met sulfoxide reductase family.

The enzyme catalyses L-methionyl-[protein] + [thioredoxin]-disulfide + H2O = L-methionyl-(S)-S-oxide-[protein] + [thioredoxin]-dithiol. The catalysed reaction is [thioredoxin]-disulfide + L-methionine + H2O = L-methionine (S)-S-oxide + [thioredoxin]-dithiol. Has an important function as a repair enzyme for proteins that have been inactivated by oxidation. Catalyzes the reversible oxidation-reduction of methionine sulfoxide in proteins to methionine. The chain is Peptide methionine sulfoxide reductase MsrA 2 (msrA2) from Caulobacter vibrioides (strain ATCC 19089 / CIP 103742 / CB 15) (Caulobacter crescentus).